The chain runs to 354 residues: Holliday junction branch migration complex subunit RuvB (354 aa).

Residues 1 to 183 form a large ATPase domain (RuvB-L) region; it reads MTGDNLVSAY…FGFVAHLDFY (183 aa). Residues Arg-23, Gly-64, Lys-67, Thr-68, Ser-69, 130-132, Arg-173, Tyr-183, and Arg-220 each bind ATP; that span reads EDF. A Mg(2+)-binding site is contributed by Thr-68. Residues 184-254 are small ATPAse domain (RuvB-S); the sequence is SPADLETLLH…AARAALLVYD (71 aa). The segment at 257–354 is head domain (RuvB-H); the sequence is ALGLDRLDRQ…DLFSVEPDQP (98 aa). DNA is bound by residues Arg-312 and Arg-317. A disordered region spans residues 330-354; that stretch reads TPPNGIFGSDAPPASDLFSVEPDQP.

The protein belongs to the RuvB family. Homohexamer. Forms an RuvA(8)-RuvB(12)-Holliday junction (HJ) complex. HJ DNA is sandwiched between 2 RuvA tetramers; dsDNA enters through RuvA and exits via RuvB. An RuvB hexamer assembles on each DNA strand where it exits the tetramer. Each RuvB hexamer is contacted by two RuvA subunits (via domain III) on 2 adjacent RuvB subunits; this complex drives branch migration. In the full resolvosome a probable DNA-RuvA(4)-RuvB(12)-RuvC(2) complex forms which resolves the HJ.

Its subcellular location is the cytoplasm. The enzyme catalyses ATP + H2O = ADP + phosphate + H(+). In terms of biological role, the RuvA-RuvB-RuvC complex processes Holliday junction (HJ) DNA during genetic recombination and DNA repair, while the RuvA-RuvB complex plays an important role in the rescue of blocked DNA replication forks via replication fork reversal (RFR). RuvA specifically binds to HJ cruciform DNA, conferring on it an open structure. The RuvB hexamer acts as an ATP-dependent pump, pulling dsDNA into and through the RuvAB complex. RuvB forms 2 homohexamers on either side of HJ DNA bound by 1 or 2 RuvA tetramers; 4 subunits per hexamer contact DNA at a time. Coordinated motions by a converter formed by DNA-disengaged RuvB subunits stimulates ATP hydrolysis and nucleotide exchange. Immobilization of the converter enables RuvB to convert the ATP-contained energy into a lever motion, pulling 2 nucleotides of DNA out of the RuvA tetramer per ATP hydrolyzed, thus driving DNA branch migration. The RuvB motors rotate together with the DNA substrate, which together with the progressing nucleotide cycle form the mechanistic basis for DNA recombination by continuous HJ branch migration. Branch migration allows RuvC to scan DNA until it finds its consensus sequence, where it cleaves and resolves cruciform DNA. The protein is Holliday junction branch migration complex subunit RuvB of Salinispora arenicola (strain CNS-205).